Here is a 536-residue protein sequence, read N- to C-terminus: Cytochrome c oxidase subunit 1 (536 aa).

The chain crosses the membrane as a helical span at residues 19–39 (IGMTYLGFGMLSAMMGTGMSV). Ca(2+) is bound at residue glutamate 44. Residue histidine 67 coordinates Fe(II)-heme a. 6 consecutive transmembrane segments (helical) span residues 69 to 89 (LLMM…NFFL), 103 to 123 (LNNI…CSVL), 152 to 172 (AMFA…NFMV), 188 to 208 (PLFA…LPVL), 240 to 260 (LFWF…FGVM), and 273 to 293 (FGEM…FLVW). Histidine 246 provides a ligand contact to Cu cation. The segment at residues 246–250 (HPEVY) is a cross-link (1'-histidyl-3'-tyrosine (His-Tyr)). Tyrosine 250 contacts O2. Cu cation contacts are provided by histidine 295 and histidine 296. A run of 2 helical transmembrane segments spans residues 315–335 (MVIA…IYGG) and 341–361 (VPML…LTGV). Residues histidine 373 and aspartate 374 each contribute to the Mg(2+) site. Histidine 381 contributes to the heme a3 binding site. A Fe(II)-heme a-binding site is contributed by histidine 383. 2 helical membrane passes run 388 to 408 (MGAL…MFGL) and 418 to 438 (HFWL…FLGL). Residue proline 446 participates in Ca(2+) binding. A helical transmembrane segment spans residues 461–481 (MGSAMSVMSVLVGLKSVLVQL).

It belongs to the heme-copper respiratory oxidase family. In terms of assembly, component of the cytochrome c oxidase (complex IV, CIV), a multisubunit enzyme composed of a catalytic core of 3 subunits and several supernumerary subunits. The complex exists as a monomer or a dimer and forms supercomplexes (SCs) in the inner mitochondrial membrane with ubiquinol-cytochrome c oxidoreductase (cytochrome b-c1 complex, complex III, CIII). The cofactor is heme. Cu cation serves as cofactor.

It is found in the mitochondrion inner membrane. The enzyme catalyses 4 Fe(II)-[cytochrome c] + O2 + 8 H(+)(in) = 4 Fe(III)-[cytochrome c] + 2 H2O + 4 H(+)(out). It functions in the pathway energy metabolism; oxidative phosphorylation. Component of the cytochrome c oxidase, the last enzyme in the mitochondrial electron transport chain which drives oxidative phosphorylation. The respiratory chain contains 3 multisubunit complexes succinate dehydrogenase (complex II, CII), ubiquinol-cytochrome c oxidoreductase (cytochrome b-c1 complex, complex III, CIII) and cytochrome c oxidase (complex IV, CIV), that cooperate to transfer electrons derived from NADH and succinate to molecular oxygen, creating an electrochemical gradient over the inner membrane that drives transmembrane transport and the ATP synthase. Cytochrome c oxidase is the component of the respiratory chain that catalyzes the reduction of oxygen to water. Electrons originating from reduced cytochrome c in the intermembrane space (IMS) are transferred via the dinuclear copper A center (CU(A)) of subunit 2 and heme A of subunit 1 to the active site in subunit 1, a binuclear center (BNC) formed by heme A3 and copper B (CU(B)). The BNC reduces molecular oxygen to 2 water molecules using 4 electrons from cytochrome c in the IMS and 4 protons from the mitochondrial matrix. This Debaryomyces hansenii (strain ATCC 36239 / CBS 767 / BCRC 21394 / JCM 1990 / NBRC 0083 / IGC 2968) (Yeast) protein is Cytochrome c oxidase subunit 1 (COX1).